We begin with the raw amino-acid sequence, 674 residues long: Forkhead box protein P1 (674 aa).

Positions 1 to 19 are enriched in polar residues; the sequence is MMQESGTETKSNGSAIQNG. Residues 1 to 44 form a disordered region; sequence MMQESGTETKSNGSAIQNGSSGGNHLLECGSLREGRSNGETPAV. A Phosphoserine modification is found at Ser82. Positions 269–281 are enriched in polar residues; it reads MNPHASTNGQLSV. The disordered stretch occupies residues 269–296; the sequence is MNPHASTNGQLSVHTPKRESLSHEEHPH. Residues 284 to 296 show a composition bias toward basic and acidic residues; sequence PKRESLSHEEHPH. Residue Lys285 forms a Glycyl lysine isopeptide (Lys-Gly) (interchain with G-Cter in SUMO2) linkage. The segment at 304 to 329 adopts a C2H2-type zinc-finger fold; it reads GVCKWPGCEAVCEDFQSFLKHLNSEH. Residues 346–367 are leucine-zipper; that stretch reads VQQLELQLAKDKERLQAMMTHL. Glycyl lysine isopeptide (Lys-Gly) (interchain with G-Cter in SUMO2) cross-links involve residues Lys370 and Lys375. A CTBP1-binding region spans residues 380 to 384; that stretch reads PLNLV. The span at 388–401 shows a compositional bias: polar residues; the sequence is TLSKSASEASPQSL. Residues 388–427 are disordered; the sequence is TLSKSASEASPQSLPHTPTTPTAPITPATQGPSVITTTSM. Residues 402-419 are compositionally biased toward low complexity; sequence PHTPTTPTAPITPATQGP. Lys440 participates in a covalent cross-link: Glycyl lysine isopeptide (Lys-Gly) (interchain with G-Cter in SUMO2). The segment at residues 462–552 is a DNA-binding region (fork-head); the sequence is RPPFTYASLI…PQKISGNPSL (91 aa). The interval 608–674 is disordered; sequence EHTNSNESDS…EDEPVNEDME (67 aa). Positions 609-620 are enriched in polar residues; the sequence is HTNSNESDSSPG. The residue at position 650 (Thr650) is a Phosphothreonine. Ser655 carries the phosphoserine modification. Residues 664-674 show a composition bias toward acidic residues; the sequence is YEDEPVNEDME.

In terms of assembly, forms homodimers and heterodimers with FOXP2 and FOXP4. Dimerization is required for DNA-binding. Self-associates. Interacts with CTBP1. Interacts with NCOR2 and AR. Interacts with FOXP2. Interacts with TBR1. Interacts with AURKA; this interaction facilitates the phosphorylation of FOXP1, which suppresses the expression of FBXL7. Interacts with ZMYM2.

Its subcellular location is the nucleus. In terms of biological role, transcriptional repressor. Can act with CTBP1 to synergistically repress transcription but CTPBP1 is not essential. Plays an important role in the specification and differentiation of lung epithelium. Acts cooperatively with FOXP4 to regulate lung secretory epithelial cell fate and regeneration by restricting the goblet cell lineage program; the function may involve regulation of AGR2. Essential transcriptional regulator of B-cell development. Involved in regulation of cardiac muscle cell proliferation. Involved in the columnar organization of spinal motor neurons. Promotes the formation of the lateral motor neuron column (LMC) and the preganglionic motor column (PGC) and is required for respective appropriate motor axon projections. The segment-appropriate generation of spinal cord motor columns requires cooperation with other Hox proteins. Can regulate PITX3 promoter activity; may promote midbrain identity in embryonic stem cell-derived dopamine neurons by regulating PITX3. Negatively regulates the differentiation of T follicular helper cells T(FH)s. Involved in maintenance of hair follicle stem cell quiescence; the function probably involves regulation of FGF18. Represses transcription of various pro-apoptotic genes and cooperates with NF-kappa B-signaling in promoting B-cell expansion by inhibition of caspase-dependent apoptosis. Binds to CSF1R promoter elements and is involved in regulation of monocyte differentiation and macrophage functions; repression of CSF1R in monocytes seems to involve NCOR2 as corepressor. Involved in endothelial cell proliferation, tube formation and migration indicative for a role in angiogenesis; the role in neovascularization seems to implicate suppression of SEMA5B. Can negatively regulate androgen receptor signaling. Acts as a transcriptional activator of the FBXL7 promoter; this activity is regulated by AURKA. This Bos taurus (Bovine) protein is Forkhead box protein P1 (FOXP1).